The sequence spans 147 residues: Sec-independent protein translocase protein TatB (147 aa).

The helical transmembrane segment at 2–22 (FDGIGFMELLLIGVLGLVVLG) threads the bilayer. A compositionally biased stretch (polar residues) spans 85 to 97 (QLKQAAQSVNRPY). Residues 85 to 147 (QLKQAAQSVN…DTRSNPKANG (63 aa)) are disordered. Low complexity predominate over residues 113–133 (ASQSVSTEASPSASSAPTSES).

This sequence belongs to the TatB family. The Tat system comprises two distinct complexes: a TatABC complex, containing multiple copies of TatA, TatB and TatC subunits, and a separate TatA complex, containing only TatA subunits. Substrates initially bind to the TatABC complex, which probably triggers association of the separate TatA complex to form the active translocon.

The protein localises to the cell inner membrane. Part of the twin-arginine translocation (Tat) system that transports large folded proteins containing a characteristic twin-arginine motif in their signal peptide across membranes. Together with TatC, TatB is part of a receptor directly interacting with Tat signal peptides. TatB may form an oligomeric binding site that transiently accommodates folded Tat precursor proteins before their translocation. This Shewanella sp. (strain ANA-3) protein is Sec-independent protein translocase protein TatB.